The chain runs to 236 residues: Purine nucleoside phosphorylase DeoD-type (236 aa).

Histidine 5 contacts a purine D-ribonucleoside. Phosphate contacts are provided by residues glycine 21, arginine 25, arginine 44, and 88-91 (RVGT). A purine D-ribonucleoside contacts are provided by residues 180 to 182 (EME) and 204 to 205 (SD). Aspartate 205 (proton donor) is an active-site residue.

This sequence belongs to the PNP/UDP phosphorylase family. In terms of assembly, homohexamer; trimer of homodimers.

The enzyme catalyses a purine D-ribonucleoside + phosphate = a purine nucleobase + alpha-D-ribose 1-phosphate. It catalyses the reaction a purine 2'-deoxy-D-ribonucleoside + phosphate = a purine nucleobase + 2-deoxy-alpha-D-ribose 1-phosphate. Its function is as follows. Catalyzes the reversible phosphorolytic breakdown of the N-glycosidic bond in the beta-(deoxy)ribonucleoside molecules, with the formation of the corresponding free purine bases and pentose-1-phosphate. The sequence is that of Purine nucleoside phosphorylase DeoD-type from Shewanella frigidimarina (strain NCIMB 400).